The following is a 206-amino-acid chain: Outer-membrane lipoprotein LolB (206 aa).

Residues 1 to 18 (MKTFKFLTALFATAILTA) form the signal peptide. The N-palmitoyl cysteine moiety is linked to residue C19. C19 carries the S-diacylglycerol cysteine lipid modification.

Belongs to the LolB family. Monomer.

The protein resides in the cell outer membrane. Functionally, plays a critical role in the incorporation of lipoproteins in the outer membrane after they are released by the LolA protein. This Haemophilus influenzae (strain PittEE) protein is Outer-membrane lipoprotein LolB.